Consider the following 467-residue polypeptide: Protein CitXG (467 aa).

Positions 1-178 are apo-citrate lyase phosphoribosyl-dephospho-CoA transferase; the sequence is MDYFEGGERL…NKMLHNFEKS (178 aa). The tract at residues 179-467 is 2-(5''-triphosphoribosyl)-3'-dephosphocoenzyme-A synthase; the sequence is KMIVPQMTQS…IFLARLVGSL (289 aa).

This sequence in the N-terminal section; belongs to the CitX family. In the C-terminal section; belongs to the CitG/MdcB family.

The enzyme catalyses apo-[citrate lyase ACP] + 2'-(5''-triphospho-alpha-D-ribosyl)-3'-dephospho-CoA = holo-[citrate lyase ACP] + diphosphate. It carries out the reaction 3'-dephospho-CoA + ATP = 2'-(5''-triphospho-alpha-D-ribosyl)-3'-dephospho-CoA + adenine. Functionally, bifunctional enzyme that catalyzes formation of 2-(5''-triphosphoribosyl)-3'-dephosphocoenzyme-A, and then the transfer of this prosthetic group precursor to the apo-acyl carrier protein (gamma chain) of the citrate lyase to yield the holo-acyl carrier protein. In Leuconostoc mesenteroides subsp. cremoris, this protein is Protein CitXG (citXG).